The chain runs to 180 residues: NAD(P)H-quinone oxidoreductase subunit 6, chloroplastic (180 aa).

The next 5 helical transmembrane spans lie at 10 to 30 (LLLA…VLLT), 32 to 52 (IIYS…FYII), 57 to 77 (FVAV…ILFA), 102 to 122 (IVCT…SWFG), and 153 to 173 (FLPF…AITI).

This sequence belongs to the complex I subunit 6 family. In terms of assembly, NDH is composed of at least 16 different subunits, 5 of which are encoded in the nucleus.

The protein resides in the plastid. It localises to the chloroplast thylakoid membrane. It catalyses the reaction a plastoquinone + NADH + (n+1) H(+)(in) = a plastoquinol + NAD(+) + n H(+)(out). The enzyme catalyses a plastoquinone + NADPH + (n+1) H(+)(in) = a plastoquinol + NADP(+) + n H(+)(out). Its function is as follows. NDH shuttles electrons from NAD(P)H:plastoquinone, via FMN and iron-sulfur (Fe-S) centers, to quinones in the photosynthetic chain and possibly in a chloroplast respiratory chain. The immediate electron acceptor for the enzyme in this species is believed to be plastoquinone. Couples the redox reaction to proton translocation, and thus conserves the redox energy in a proton gradient. The sequence is that of NAD(P)H-quinone oxidoreductase subunit 6, chloroplastic (ndhG) from Cryptomeria japonica (Japanese cedar).